The sequence spans 503 residues: Cytochrome P450 3A43 (503 aa).

Cys-442 contributes to the heme binding site.

This sequence belongs to the cytochrome P450 family. Heme is required as a cofactor. In terms of tissue distribution, highest expression level in prostate. Also expressed in liver, kidney, pancreas, fetal liver and fetal skeletal muscle.

It is found in the endoplasmic reticulum membrane. Its subcellular location is the microsome membrane. The catalysed reaction is an organic molecule + reduced [NADPH--hemoprotein reductase] + O2 = an alcohol + oxidized [NADPH--hemoprotein reductase] + H2O + H(+). Functionally, exhibits low testosterone 6-beta-hydroxylase activity. The sequence is that of Cytochrome P450 3A43 (CYP3A43) from Homo sapiens (Human).